The following is a 248-amino-acid chain: Cutinase (248 aa).

Positions 1 to 17 (MRSLAILTTLLAGHAFA) are cleaved as a signal peptide. Residues 18–28 (YPKPAPQSVNR) constitute a propeptide that is removed on maturation. A lid covering the active site of the uncomplexed enzyme region spans residues 31-70 (WPSINEFLSELAKVMPIGDTITAACDLISDGEDAAASLFG). 2 disulfides stabilise this stretch: cysteine 55-cysteine 91 and cysteine 79-cysteine 153. Serine 164 serves as the catalytic Nucleophile. A disulfide bond links cysteine 212 and cysteine 219. Aspartate 216 is an active-site residue. Residue histidine 229 is the Proton donor/acceptor of the active site.

The protein belongs to the cutinase family.

It localises to the secreted. The enzyme catalyses cutin + H2O = cutin monomers.. With respect to regulation, weakly inhibited by n-undecyl phosphonate (C11Y4). Activity unaffected by paraoxon. Catalyzes the hydrolysis of complex carboxylic polyesters found in the cell wall of plants. Degrades cutin, a macromolecule that forms the structure of the plant cuticle. This chain is Cutinase, found in Hypocrea jecorina (strain QM6a) (Trichoderma reesei).